We begin with the raw amino-acid sequence, 177 residues long: 3-hydroxydecanoyl-[acyl-carrier-protein] dehydratase (177 aa).

H76 is an active-site residue.

It belongs to the thioester dehydratase family. FabA subfamily. As to quaternary structure, homodimer.

It is found in the cytoplasm. It carries out the reaction a (3R)-hydroxyacyl-[ACP] = a (2E)-enoyl-[ACP] + H2O. The catalysed reaction is (3R)-hydroxydecanoyl-[ACP] = (2E)-decenoyl-[ACP] + H2O. It catalyses the reaction (2E)-decenoyl-[ACP] = (3Z)-decenoyl-[ACP]. The protein operates within lipid metabolism; fatty acid biosynthesis. Functionally, necessary for the introduction of cis unsaturation into fatty acids. Catalyzes the dehydration of (3R)-3-hydroxydecanoyl-ACP to E-(2)-decenoyl-ACP and then its isomerization to Z-(3)-decenoyl-ACP. Can catalyze the dehydratase reaction for beta-hydroxyacyl-ACPs with saturated chain lengths up to 16:0, being most active on intermediate chain length. This is 3-hydroxydecanoyl-[acyl-carrier-protein] dehydratase from Haemophilus influenzae (strain PittGG).